The chain runs to 69 residues: Guanine nucleotide-binding protein G(I)/G(S)/G(O) subunit gamma-T2 (69 aa).

The segment at 47-69 is disordered; that stretch reads DPLLKGIPEDKNPFKEKGGCMIS. The span at 53–69 shows a compositional bias: basic and acidic residues; it reads IPEDKNPFKEKGGCMIS. At cysteine 66 the chain carries Cysteine methyl ester. Cysteine 66 carries S-farnesyl cysteine lipidation. Positions 67–69 are cleaved as a propeptide — removed in mature form; sequence MIS.

This sequence belongs to the G protein gamma family. G proteins are composed of 3 units, alpha, beta and gamma.

The protein resides in the cell membrane. In terms of biological role, guanine nucleotide-binding proteins (G proteins) are involved as a modulator or transducer in various transmembrane signaling systems. The beta and gamma chains are required for the GTPase activity, for replacement of GDP by GTP, and for G protein-effector interaction. In Canis lupus familiaris (Dog), this protein is Guanine nucleotide-binding protein G(I)/G(S)/G(O) subunit gamma-T2 (GNGT2).